Here is a 260-residue protein sequence, read N- to C-terminus: Putative methylesterase 19 (260 aa).

The active-site Acyl-ester intermediate is serine 81. Residues aspartate 210 and histidine 238 each act as charge relay system in the active site.

This sequence belongs to the AB hydrolase superfamily. Methylesterase family.

Its function is as follows. Putative methylesterase. The protein is Putative methylesterase 19 of Arabidopsis thaliana (Mouse-ear cress).